The sequence spans 45 residues: Large ribosomal subunit protein bL34 (45 aa).

This sequence belongs to the bacterial ribosomal protein bL34 family.

The chain is Large ribosomal subunit protein bL34 from Opitutus terrae (strain DSM 11246 / JCM 15787 / PB90-1).